Reading from the N-terminus, the 248-residue chain is Putative glutamine amidotransferase-like protein C13C5.04 (248 aa).

Residues 13-217 (PMVEITSAYG…VKVLRGTEVF (205 aa)) form the Glutamine amidotransferase type-1 domain.

The protein is Putative glutamine amidotransferase-like protein C13C5.04 of Schizosaccharomyces pombe (strain 972 / ATCC 24843) (Fission yeast).